Consider the following 159-residue polypeptide: MSITGQPHVYKKDTIIRLKPLSLNSNNRSYVFSSSKGNIQNIINHLNNLNEIVGRSLLGIWKINSYFGLSKDPSESKSKNPSVFNTAKTIFKSGGVDYSSQLKEIKSLLEAQNTRIKSLENAIQSLDNKIEPEPLTKEEVKELKESINSIKEGLKNIIG.

The protein belongs to the caulimoviridae ORF II family.

This protein is involved in virus transmission. This chain is Aphid transmission protein, found in Cauliflower mosaic virus (strain NY8153) (CaMV).